Reading from the N-terminus, the 129-residue chain is Protachykinin-1 (129 aa).

An N-terminal signal peptide occupies residues methionine 1 to alanine 19. The propeptide occupies glutamate 20–alanine 56. Methionine amide is present on residues methionine 68 and methionine 107.

Belongs to the tachykinin family. Post-translationally, the substance P form is cleaved at Pro-59 by the prolyl endopeptidase FAP (seprase) activity (in vitro). Substance P is also cleaved and degraded by Angiotensin-converting enzyme (ACE) and neprilysin (MME).

Its subcellular location is the secreted. Its function is as follows. Tachykinins are active peptides which excite neurons, evoke behavioral responses, are potent vasodilators and secretagogues, and contract (directly or indirectly) many smooth muscles. The polypeptide is Protachykinin-1 (TAC1) (Homo sapiens (Human)).